A 272-amino-acid chain; its full sequence is Small ribosomal subunit protein uS2 (272 aa).

The span at 224 to 233 shows a compositional bias: basic and acidic residues; the sequence is EGKKAREERQ. A disordered region spans residues 224–272; it reads EGKKAREERQLAAAKDAAGDAKPEAEEAPAAAEAEEAPAAEAEEAPAAE. Residues 256–272 show a composition bias toward acidic residues; sequence EAEEAPAAEAEEAPAAE.

It belongs to the universal ribosomal protein uS2 family.

In Corynebacterium glutamicum (strain ATCC 13032 / DSM 20300 / JCM 1318 / BCRC 11384 / CCUG 27702 / LMG 3730 / NBRC 12168 / NCIMB 10025 / NRRL B-2784 / 534), this protein is Small ribosomal subunit protein uS2.